The chain runs to 301 residues: Mitochondrial substrate carrier family protein X (301 aa).

Topologically, residues 1-23 are mitochondrial intermembrane; the sequence is MVQQQQQQQQIKKNQVKPPLYSN. 3 Solcar repeats span residues 18–109, 117–199, and 208–296; these read PPLY…FRTR, IKLW…MKHN, and IGLP…QKSF. The helical transmembrane segment at 24–44 threads the bilayer; it reads LIAGAIAGVIGSSVVFPLDFV. Over 45–75 the chain is Mitochondrial matrix; it reads KTRLQQQRVSIDGSKQYNGIIDCFKKVIKNE. The helical transmembrane segment at 76-97 threads the bilayer; that stretch reads GGVRGLYRGLSSNLIGIIPEKA. At 98 to 122 the chain is on the mitochondrial intermembrane side; sequence LKLAMNDYFRTRFQGDRSYIKLWEE. The helical transmembrane segment at 123-143 threads the bilayer; sequence VASGGLAGMCQVVATNPMELV. Over 144 to 173 the chain is Mitochondrial matrix; sequence KIRMQVSGLSGKKASLKEVVSELGIKGLYK. The chain crosses the membrane as a helical span at residues 174 to 194; sequence GTASTLLRDVPFSMIYFSIYG. Residues 195-207 lie on the Mitochondrial intermembrane side of the membrane; the sequence is RMKHNLTDQETGE. Residues 208–228 traverse the membrane as a helical segment; that stretch reads IGLPKILLCGITAGSIAASVS. Topologically, residues 229–271 are mitochondrial matrix; sequence TPFDVIKTRIQVKPGPNDPHYKGIADCFRKTIQSEGPKALFKG. The helical transmembrane segment at 272 to 292 threads the bilayer; that stretch reads VLPRVCIISPLFGITLVVYEI. The Mitochondrial intermembrane segment spans residues 293–301; it reads QKSFYASTH.

This sequence belongs to the mitochondrial carrier (TC 2.A.29) family.

It is found in the mitochondrion inner membrane. In terms of biological role, mitochondrial solute carriers shuttle metabolites, nucleotides, and cofactors through the mitochondrial inner membrane. This is Mitochondrial substrate carrier family protein X (mcfX) from Dictyostelium discoideum (Social amoeba).